A 219-amino-acid polypeptide reads, in one-letter code: Small ribosomal subunit protein uS3 (219 aa).

The KH type-2 domain occupies 38–106 (IREYIENRLK…RVHINIFEVK (69 aa)).

This sequence belongs to the universal ribosomal protein uS3 family. As to quaternary structure, part of the 30S ribosomal subunit. Forms a tight complex with proteins S10 and S14.

Its function is as follows. Binds the lower part of the 30S subunit head. Binds mRNA in the 70S ribosome, positioning it for translation. This is Small ribosomal subunit protein uS3 from Halalkalibacterium halodurans (strain ATCC BAA-125 / DSM 18197 / FERM 7344 / JCM 9153 / C-125) (Bacillus halodurans).